The chain runs to 417 residues: Sulfate adenylyltransferase (417 aa).

The span at 1 to 10 shows a compositional bias: polar residues; the sequence is MTSITANQKP. Residues 1–20 form a disordered region; it reads MTSITANQKPSKLVPPHGSP.

It belongs to the sulfate adenylyltransferase family.

It catalyses the reaction sulfate + ATP + H(+) = adenosine 5'-phosphosulfate + diphosphate. The protein operates within sulfur metabolism; hydrogen sulfide biosynthesis; sulfite from sulfate: step 1/3. The protein is Sulfate adenylyltransferase of Psychrobacter arcticus (strain DSM 17307 / VKM B-2377 / 273-4).